Reading from the N-terminus, the 343-residue chain is Tribbles homolog 2 (343 aa).

Positions 25-50 (EELSSIRSAEPSQSFSPNLGSPSPPE) are disordered. Over residues 29–45 (SIRSAEPSQSFSPNLGS) the composition is skewed to polar residues. In terms of domain architecture, Protein kinase spans 61–308 (IGKYLLLEPL…SQEILDHPWF (248 aa)).

The protein belongs to the protein kinase superfamily. CAMK Ser/Thr protein kinase family. Tribbles subfamily. Expressed in granulosa cells of the dominant follicles of the ovary and down-regulated in ovulatory follicles.

Its subcellular location is the cytoplasm. The protein localises to the cytoskeleton. In terms of biological role, interacts with MAPK kinases and regulates activation of MAP kinases. Does not display kinase activity. The sequence is that of Tribbles homolog 2 from Bos taurus (Bovine).